Consider the following 434-residue polypeptide: Chaperone SurA (434 aa).

Residues 1-22 (MKPSKHLIFALFALAISQPTMA) form the signal peptide. PpiC domains follow at residues 173 to 274 (DVEY…KIMD) and 283 to 383 (IEEV…QLEE).

Its subcellular location is the periplasm. It catalyses the reaction [protein]-peptidylproline (omega=180) = [protein]-peptidylproline (omega=0). Its function is as follows. Chaperone involved in the correct folding and assembly of outer membrane proteins. Recognizes specific patterns of aromatic residues and the orientation of their side chains, which are found more frequently in integral outer membrane proteins. May act in both early periplasmic and late outer membrane-associated steps of protein maturation. In Shewanella oneidensis (strain ATCC 700550 / JCM 31522 / CIP 106686 / LMG 19005 / NCIMB 14063 / MR-1), this protein is Chaperone SurA.